Reading from the N-terminus, the 90-residue chain is Mitochondrial import inner membrane translocase subunit Tim10 (90 aa).

Positions C29–C54 match the Twin CX3C motif motif. 2 cysteine pairs are disulfide-bonded: C29–C54 and C33–C50.

Belongs to the small Tim family. In terms of assembly, heterohexamer; composed of 3 copies of TIMM9 and 3 copies of TIMM10/TIM10A, named soluble 70 kDa complex. The complex forms a 6-bladed alpha-propeller structure and associates with the TIMM22 component of the TIM22 complex. Interacts with multi-pass transmembrane proteins in transit. Also forms a complex composed of TIMM9, TIMM10/TIM10A and FXC1/TIM10B.

Its subcellular location is the mitochondrion inner membrane. In terms of biological role, mitochondrial intermembrane chaperone that participates in the import and insertion of multi-pass transmembrane proteins into the mitochondrial inner membrane. May also be required for the transfer of beta-barrel precursors from the TOM complex to the sorting and assembly machinery (SAM complex) of the outer membrane. Acts as a chaperone-like protein that protects the hydrophobic precursors from aggregation and guide them through the mitochondrial intermembrane space. This chain is Mitochondrial import inner membrane translocase subunit Tim10 (Timm10), found in Rattus norvegicus (Rat).